Reading from the N-terminus, the 315-residue chain is MRVLLAPMEGVLDSLVRELLTEVNDYDLCITEFVRVVDQLLPVKVFHRICPELQNASRTPSGTLVRVQLLGQFPQWLAENAARAVELGFWGVDLNCGCPSKTVNGSGGGATLLKDPELIYQGAKAMREAVPAHLPVSVKVRLGWDSGEKKFEIADAVQQAGATELVVHGRTKEQGYRAEHIDWQAIGEIRQRLNIPVIANGEIWDWQSAQQCMAISGCDAVMIGRGALNIPNLSRVVKYNEPRMPWPEVVALLQKYTRLEKQGDTGLYHVARIKQWLSYLRKEYDEATELFQHVRVLNNSPDIARAIQAIDIEKL.

Residues 7-9 and Q68 contribute to the FMN site; that span reads PME. C98 (proton donor) is an active-site residue. Residues K139, 200–202, and 224–225 contribute to the FMN site; these read NGE and GR.

Belongs to the Dus family. DusC subfamily. FMN is required as a cofactor.

The catalysed reaction is 5,6-dihydrouridine(16) in tRNA + NADP(+) = uridine(16) in tRNA + NADPH + H(+). The enzyme catalyses 5,6-dihydrouridine(16) in tRNA + NAD(+) = uridine(16) in tRNA + NADH + H(+). In terms of biological role, catalyzes the synthesis of 5,6-dihydrouridine (D), a modified base found in the D-loop of most tRNAs, via the reduction of the C5-C6 double bond in target uridines. Specifically modifies U16 in tRNAs. This Shigella flexneri protein is tRNA-dihydrouridine(16) synthase.